A 201-amino-acid chain; its full sequence is Small ribosomal subunit protein uS4 (201 aa).

Residues Ser91–Glu151 enclose the S4 RNA-binding domain.

Belongs to the universal ribosomal protein uS4 family. Part of the 30S ribosomal subunit. Contacts protein S5. The interaction surface between S4 and S5 is involved in control of translational fidelity.

Its function is as follows. One of the primary rRNA binding proteins, it binds directly to 16S rRNA where it nucleates assembly of the body of the 30S subunit. In terms of biological role, with S5 and S12 plays an important role in translational accuracy. This is Small ribosomal subunit protein uS4 from Corynebacterium jeikeium (strain K411).